Consider the following 395-residue polypeptide: Probable alcohol dehydrogenase EutG (395 aa).

NAD(+) is bound by residues Asp-57, 116-120 (GSVLD), 156-160 (TTAGT), Lys-178, and 197-201 (VTEGV). Fe cation-binding residues include Asp-212, His-216, His-281, and His-295. 2 residues coordinate NAD(+): His-295 and Asp-354.

The protein belongs to the iron-containing alcohol dehydrogenase family. It depends on Fe cation as a cofactor.

The protein localises to the bacterial microcompartment. It catalyses the reaction ethanol + NAD(+) = acetaldehyde + NADH + H(+). Its pathway is amine and polyamine degradation; ethanolamine degradation. In terms of biological role, probably acts on the acetaldehyde produced by the degradation of ethanolamine, producing ethanol. Functionally, expression of the eut operon allows this bacteria to use ethanolamine (EA) as a carbon, nitrogen and energy source. It relies on cobalamin (vitamin B12) both as a cofactor for the ethanolamine ammonia-lyase (EAL) activity and to induce the operon. EA enhances bacterial survival in macrophages in a concentration-dependent manner, suggesting it is an important nutrient during infection. This chain is Probable alcohol dehydrogenase EutG, found in Salmonella typhimurium (strain LT2 / SGSC1412 / ATCC 700720).